The following is a 305-amino-acid chain: PI-PLC X domain-containing protein 1 (305 aa).

A signal peptide spans 1–24 (MSMSTLRHFLWLGALLLATIQVSA). The region spanning 25–189 (LPTAQDLICN…RLIVFVDSKA (165 aa)) is the PI-PLC X-box domain. Catalysis depends on residues His53 and His97. Asn237 carries N-linked (GlcNAc...) asparagine glycosylation.

It localises to the secreted. This Arthroderma benhamiae (strain ATCC MYA-4681 / CBS 112371) (Trichophyton mentagrophytes) protein is PI-PLC X domain-containing protein 1.